The following is a 345-amino-acid chain: Phosphoribosylformylglycinamidine cyclo-ligase (345 aa).

Belongs to the AIR synthase family.

It is found in the cytoplasm. It carries out the reaction 2-formamido-N(1)-(5-O-phospho-beta-D-ribosyl)acetamidine + ATP = 5-amino-1-(5-phospho-beta-D-ribosyl)imidazole + ADP + phosphate + H(+). It participates in purine metabolism; IMP biosynthesis via de novo pathway; 5-amino-1-(5-phospho-D-ribosyl)imidazole from N(2)-formyl-N(1)-(5-phospho-D-ribosyl)glycinamide: step 2/2. The sequence is that of Phosphoribosylformylglycinamidine cyclo-ligase from Synechococcus sp. (strain CC9605).